A 351-amino-acid chain; its full sequence is Photosystem II D2 protein 2 (351 aa).

The chain crosses the membrane as a helical span at residues 39 to 59; the sequence is CAFLSIGGWFTGTTFVTSWYT. His116 lines the chlorophyll a pocket. Residues 123–139 traverse the membrane as a helical segment; that stretch reads GFMLRQFEIARLVNVRP. Residues Gln128 and Asn141 each contribute to the pheophytin a site. The helical transmembrane segment at 151–164 threads the bilayer; that stretch reads VFVSVFLMYPLGQS. His196 is a chlorophyll a binding site. Residues 206 to 226 traverse the membrane as a helical segment; sequence GALLCAIHGATVENTLFEDTK. His213 and Phe260 together coordinate a plastoquinone. His213 is a binding site for Fe cation. His267 contributes to the Fe cation binding site. The helical transmembrane segment at 277–293 threads the bilayer; the sequence is GLWASAIGLVGIALNMR.

The protein belongs to the reaction center PufL/M/PsbA/D family. In terms of assembly, PSII is composed of 1 copy each of membrane proteins PsbA, PsbB, PsbC, PsbD, PsbE, PsbF, PsbH, PsbI, PsbJ, PsbK, PsbL, PsbM, PsbT, PsbX, PsbY, PsbZ, Psb30/Ycf12, peripheral proteins PsbO, CyanoQ (PsbQ), PsbU, PsbV and a large number of cofactors. It forms dimeric complexes. It depends on The D1/D2 heterodimer binds P680, chlorophylls that are the primary electron donor of PSII, and subsequent electron acceptors. It shares a non-heme iron and each subunit binds pheophytin, quinone, additional chlorophylls, carotenoids and lipids. There is also a Cl(-1) ion associated with D1 and D2, which is required for oxygen evolution. The PSII complex binds additional chlorophylls, carotenoids and specific lipids. as a cofactor.

Its subcellular location is the cellular thylakoid membrane. It carries out the reaction 2 a plastoquinone + 4 hnu + 2 H2O = 2 a plastoquinol + O2. Photosystem II (PSII) is a light-driven water:plastoquinone oxidoreductase that uses light energy to abstract electrons from H(2)O, generating O(2) and a proton gradient subsequently used for ATP formation. It consists of a core antenna complex that captures photons, and an electron transfer chain that converts photonic excitation into a charge separation. The D1/D2 (PsbA/PsbD) reaction center heterodimer binds P680, the primary electron donor of PSII as well as several subsequent electron acceptors. D2 is needed for assembly of a stable PSII complex. This is Photosystem II D2 protein 2 from Acaryochloris marina (strain MBIC 11017).